The chain runs to 274 residues: Putative ABC transporter ATP-binding protein alr3946 (274 aa).

In terms of domain architecture, ABC transporter spans 6–242; the sequence is LTFEQVYYTY…REILDSIELG (237 aa). ATP is bound at residue 40-47; the sequence is GRNGCGKT.

This sequence belongs to the ABC transporter superfamily.

It localises to the cell inner membrane. Probably part of an ABC transporter complex. Responsible for energy coupling to the transport system. This Nostoc sp. (strain PCC 7120 / SAG 25.82 / UTEX 2576) protein is Putative ABC transporter ATP-binding protein alr3946.